A 793-amino-acid chain; its full sequence is MSRRRQNDEEDEIQMKRRRGAPLIGDVEKKLQEVIGKVGDKNTGSSIEANLEKLTAFLHDDLEKYRSSIIDIVAGCAIYLPNRVTVYTTLVGLLNAKNFNFGGDVVEKLIAEQQDLLLKQKYQEAQNLAIFLCDLGNSGVLTAQSIGEYLESFIAAAFEENMPQVRNDYYIQTVLRCLPWIGKELTEKAQEQMENIVEAVGKYLEMRNKNHVPLLRVWREGSTDQEQEDYLESLSAQIENLRTANWMQNHIPRYYNTFEAVLQDALQHNLPSFSSPEHTSDMIYPYPLVVFRLFQDADCGTDSQLPSGHSIDRFLFEGEISWIIEKNQFNRKSCARELLAFADENPTAPVGFLIFETIFGQMLRLPHAPYPAIFHCSLVLELLKLKPNDYPNILCKTVDLIFSRADSMQPICIDRMVDWFSFHLSNFQYRYTWDEWKDCISNDEFSGRQVFLREVIEKCRRLGSYEKIIAALPSDFVKIHPASPEIRYLLDEEDAMSQRAETFTQMFQERQPADAFLKELKSTDENDELPYNINEFGVFVTVMLKMASKTYSHNFSALFRYKDTLKTVCDAAEQYQEKLLETLYSCWKSNQQMLMILTDKLLKMQIIDCSSVVGWLFDEKMWQEHNRQWLFEVLNQALEKLTRQINVVEKDIKDLTEKVESKEKVTEAGDVKMEEETVVDEKLKGEMEELENHKEKLDRMVSFQRNLFNDFLIAFVEEIKSAATNTSEMDGSGDVGGSESSKFLWLRGRFCHVLLAHAETLLKHSSSIAEEVFSEGADPNISECFNQFQSLRF.

One can recognise an MIF4G domain in the interval 28 to 242; that stretch reads EKKLQEVIGK…SLSAQIENLR (215 aa).

Belongs to the NCBP1 family. In terms of assembly, component of the nuclear cap-binding complex (CBC), a heterodimer composed of ncbp-1 and ncbp-1 that interacts with m7GpppG-capped RNA.

It is found in the nucleus. Component of the cap-binding complex (CBC), which binds cotranscriptionally to the 5'-cap of pre-mRNAs and is involved in various processes such as pre-mRNA splicing and RNA-mediated gene silencing (RNAi). The CBC complex is involved in miRNA-mediated RNA interference and is required for primary microRNAs (miRNAs) processing. In the CBC complex, ncbp-1 does not bind directly capped RNAs (m7GpppG-capped RNA) but is required to stabilize the movement of the N-terminal loop of ncbp-2 and lock the CBC into a high affinity cap-binding state with the cap structure. In Caenorhabditis briggsae, this protein is Nuclear cap-binding protein subunit 1 (ncbp-1).